The primary structure comprises 404 residues: Na(+)/H(+) antiporter NhaA 2 (404 aa).

A run of 11 helical transmembrane segments spans residues 24–44, 67–87, 103–123, 132–152, 161–181, 184–204, 216–236, 266–286, 303–323, 339–359, and 372–392; these read GIILLICAIAAIMIANSSFSG, VLHWINDGLMAIFFLVVGMEI, ILPISAAIGGMIVPAIIYALF, GWGIPMATDIAFALGMLSLVA, VFLTALAIVDDLGAIIVIAIF, SQISWIALLLGLIVFATLILA, IILGIILWICLLKSGIHATIA, TPWSSFVIMPIFAFANAGIII, IIFGLFVGKQIGIFGTSFILI, LYGASVFGGIGFTMSIFVSSL, and MCIMIASILAATYGTIVFKFI.

The protein belongs to the NhaA Na(+)/H(+) (TC 2.A.33) antiporter family.

The protein localises to the cell membrane. The catalysed reaction is Na(+)(in) + 2 H(+)(out) = Na(+)(out) + 2 H(+)(in). In terms of biological role, na(+)/H(+) antiporter that extrudes sodium in exchange for external protons. This Clostridium beijerinckii (strain ATCC 51743 / NCIMB 8052) (Clostridium acetobutylicum) protein is Na(+)/H(+) antiporter NhaA 2.